A 341-amino-acid chain; its full sequence is UDP-glucose 4-epimerase (341 aa).

The protein belongs to the polysaccharide synthase family.

The catalysed reaction is UDP-alpha-D-glucose = UDP-alpha-D-galactose. Its function is as follows. Epimerizes UDP-galactose to UDP-glucose. The polypeptide is UDP-glucose 4-epimerase (capD) (Rickettsia conorii (strain ATCC VR-613 / Malish 7)).